The following is a 406-amino-acid chain: Odorant receptor 10a (406 aa).

The Cytoplasmic portion of the chain corresponds to 1–45 (MSEWLRFLKRDQQLDVYFFAVPRLSLDIMGYWPGKTGDTWPWRSL). The helical transmembrane segment at 46-66 (IHFAILAIGVATELHAGMCFL) threads the bilayer. Residues 67–74 (DRQQITLA) lie on the Extracellular side of the membrane. A helical transmembrane segment spans residues 75-95 (LETLCPAGTSAVTLLKMFLML). Residues 96-143 (RFRQDLSIMWNRLRGLLFDPNWERPEQRDIRLKHSAMAARINFWPLSA) lie on the Cytoplasmic side of the membrane. The chain crosses the membrane as a helical span at residues 144-164 (GFFTCTTYNLKPILIAMILYL). At 165 to 189 (QNRYEDFVWFTPFNMTMPKVLLNYP) the chain is on the extracellular side. A glycan (N-linked (GlcNAc...) asparagine) is linked at asparagine 178. The helical transmembrane segment at 190–210 (FFPLTYIFIAYTGYVTIFMFG) threads the bilayer. Topologically, residues 211–281 (GCDGFYFEFC…LTRFFRDRYT (71 aa)) are cytoplasmic. A helical membrane pass occupies residues 282 to 302 (IITLAHFVSAAMVIGFSMVNL). At 303 to 308 (LTLGNN) the chain is on the extracellular side. Residues 309–329 (GLGAMLYVAYTVAALSQLLVY) form a helical membrane-spanning segment. Residues 330-372 (CYGGTLVAESSTGLCRAMFSCPWQLFKPKQRRLVQLLILRSQR) are Cytoplasmic-facing. A helical transmembrane segment spans residues 373 to 393 (PVSMAVPFFSPSLATFAAILQ). Topologically, residues 394–406 (TSGSIIALVKSFQ) are extracellular.

The protein belongs to the insect chemoreceptor superfamily. Heteromeric odorant receptor channel (TC 1.A.69) family. Or1a subfamily. As to quaternary structure, interacts with Orco. Complexes exist early in the endomembrane system in olfactory sensory neurons (OSNs), coupling these complexes to the conserved ciliary trafficking pathway. In terms of tissue distribution, expressed in olfactory sensory neurons in the antenna.

It localises to the cell membrane. Its function is as follows. Odorant receptor which mediates acceptance or avoidance behavior, depending on its substrates. The odorant receptor repertoire encodes a large collection of odor stimuli that vary widely in identity, intensity, and duration. May form a complex with Orco to form odorant-sensing units, providing sensitive and prolonged odorant signaling and calcium permeability. Involved in the behavioral responses to esters, and specifically to ethyl hexanoate, benzaldehyde, and acetophenone. This is Odorant receptor 10a (Or10a) from Drosophila melanogaster (Fruit fly).